Here is a 190-residue protein sequence, read N- to C-terminus: RNA pyrophosphohydrolase (190 aa).

One can recognise a Nudix hydrolase domain in the interval 6–149; the sequence is GYRPNVGIVL…KRSVYARALC (144 aa). Positions 38–59 match the Nudix box motif; sequence GGMHSDETPVEAMYRELNEETG.

Belongs to the Nudix hydrolase family. RppH subfamily. It depends on a divalent metal cation as a cofactor.

Accelerates the degradation of transcripts by removing pyrophosphate from the 5'-end of triphosphorylated RNA, leading to a more labile monophosphorylated state that can stimulate subsequent ribonuclease cleavage. The sequence is that of RNA pyrophosphohydrolase from Xylella fastidiosa (strain Temecula1 / ATCC 700964).